The sequence spans 687 residues: Putative metabolite transport protein YDL199C (687 aa).

Residues Met-1–Ala-22 form a disordered region. Topologically, residues Met-1–Ser-122 are extracellular. A compositionally biased stretch (polar residues) spans Met-7–Ala-22. Phosphoserine is present on Ser-90. A helical membrane pass occupies residues Phe-123–Gly-143. The Cytoplasmic portion of the chain corresponds to Asn-144–Asn-164. A helical membrane pass occupies residues Ile-165–Leu-185. Topologically, residues Glu-186–Lys-192 are extracellular. Residues Met-193 to Asn-213 form a helical membrane-spanning segment. The Cytoplasmic segment spans residues Gln-214–Cys-216. The chain crosses the membrane as a helical span at residues Leu-217–Ile-237. Over Tyr-238–Thr-251 the chain is Extracellular. Residues Leu-252 to Cys-272 form a helical membrane-spanning segment. At Ala-273–Tyr-283 the chain is on the cytoplasmic side. A helical membrane pass occupies residues Pro-284–Leu-304. Residues Glu-305–Tyr-410 lie on the Extracellular side of the membrane. A helical transmembrane segment spans residues Leu-411–Leu-431. The Cytoplasmic portion of the chain corresponds to Arg-432–Asn-439. Residues Val-440 to Phe-460 traverse the membrane as a helical segment. Residues Pro-461–Ser-469 lie on the Extracellular side of the membrane. The helical transmembrane segment at Ile-470 to Met-490 threads the bilayer. The Cytoplasmic portion of the chain corresponds to Thr-491–Gln-500. Residues Ala-501–Ile-521 form a helical membrane-spanning segment. Residues Thr-522–Phe-533 lie on the Extracellular side of the membrane. The chain crosses the membrane as a helical span at residues Tyr-534 to Ile-554. Residues Glu-555–Ala-687 are Cytoplasmic-facing. Disordered regions lie at residues Leu-561–Ser-587 and Ser-654–Ala-687. Polar residues predominate over residues Asp-660–Ser-673.

This sequence belongs to the major facilitator superfamily. Sugar transporter (TC 2.A.1.1) family.

The protein resides in the membrane. This chain is Putative metabolite transport protein YDL199C, found in Saccharomyces cerevisiae (strain ATCC 204508 / S288c) (Baker's yeast).